The chain runs to 235 residues: Glycerol uptake facilitator protein 2 (235 aa).

6 helical membrane-spanning segments follow: residues 4-24 (FLGE…SGAA), 39-59 (FICL…GQFG), 62-82 (GHLN…PMAN), 83-103 (VWPY…IVII), 134-154 (VFNF…LLNL), and 165-185 (MVGL…GFAI). An NPA 1 motif is present at residues 65-67 (NPA). An NPA 2 motif is present at residues 186–188 (NPA). The chain crosses the membrane as a helical span at residues 210–230 (WGYAWVPMFGPLLGGILAAGL).

Belongs to the MIP/aquaporin (TC 1.A.8) family.

The protein localises to the cell membrane. Functionally, transporter that facilitates the transmembrane diffusion of water, dihydroxyacetone, glycerol and H(2)O(2). Is not permeable to urea and D/L-lactic acid. In Lactiplantibacillus plantarum (strain ATCC BAA-793 / NCIMB 8826 / WCFS1) (Lactobacillus plantarum), this protein is Glycerol uptake facilitator protein 2.